The following is a 145-amino-acid chain: 3-hydroxyacyl-[acyl-carrier-protein] dehydratase FabZ (145 aa).

His-49 is a catalytic residue.

Belongs to the thioester dehydratase family. FabZ subfamily.

The protein resides in the cytoplasm. The enzyme catalyses a (3R)-hydroxyacyl-[ACP] = a (2E)-enoyl-[ACP] + H2O. Its function is as follows. Involved in unsaturated fatty acids biosynthesis. Catalyzes the dehydration of short chain beta-hydroxyacyl-ACPs and long chain saturated and unsaturated beta-hydroxyacyl-ACPs. In Rickettsia typhi (strain ATCC VR-144 / Wilmington), this protein is 3-hydroxyacyl-[acyl-carrier-protein] dehydratase FabZ.